Reading from the N-terminus, the 245-residue chain is CMRF35-like molecule 3 (245 aa).

Residues 1-18 form the signal peptide; it reads MWQFPALLFLFLPGCCTA. In terms of domain architecture, Ig-like V-type spans 19-124; it reads QDPVTGPEEV…TDPMFKVNVN (106 aa). At 19-189 the chain is on the extracellular side; that stretch reads QDPVTGPEEV…FIWSLLSSIS (171 aa). Cys40 and Cys108 are joined by a disulfide. Important for maintaining surface expression and for interaction with FCER1G stretches follow at residues 177 to 182 and 189 to 198; these read NSLFIW and SFLLMVFVVV. The helical transmembrane segment at 190 to 210 threads the bilayer; that stretch reads FLLMVFVVVPLLLSMLSAVLW. The Cytoplasmic portion of the chain corresponds to 211–245; sequence VNRPQRHYGGGEIGLVETHRSDALDGEKHFPGDEK.

Belongs to the CD300 family. As to quaternary structure, interacts with FCER1G; the interaction may be indirect. Interacts with TLR9. In terms of tissue distribution, highly expressed in bone marrow-derived mast cells and macrophages, peripheral blood monocytes and CD11c+ cells, with weaker expression detected in CD11b cells in bone marrow and peripheral blood. Not detected in B220+ cells in bone marrow or spleen, in Thy-1.2+ or CD3+ cells in peripheral blood, spleen or thymus, or in NK1.1+ cells in spleen (at protein level). Widely expressed in various tissues including heart, liver, spleen, lung, kidney, brain, bone marrow, thymus, axillary lymph node and mesenteric lymph node. Highly expressed in macrophage cell lines J774.1 and RAW 264.7 and in mast cell line MC/9. Weak expression detected in B-lineage cell lines WEHI-231 and A20 and in dendritic cell line DC2.4. Not detected in other myeloid cell lines or T-lineage cell lines.

Its subcellular location is the cell membrane. It localises to the early endosome. It is found in the lysosome. In terms of biological role, acts as an activating receptor inducing cytokine production in mast cells. Can act as a positive regulator of TLR9 signaling in macrophages, leading to enhanced production of pro-inflammatory cytokines. The chain is CMRF35-like molecule 3 from Mus musculus (Mouse).